A 641-amino-acid polypeptide reads, in one-letter code: Chaperone protein DnaK (641 aa).

Threonine 200 is subject to Phosphothreonine; by autocatalysis. Residues 605-623 (AAEQGGSADAASGNAQASK) are compositionally biased toward low complexity. Residues 605-627 (AAEQGGSADAASGNAQASKAADD) are disordered.

This sequence belongs to the heat shock protein 70 family.

Its function is as follows. Acts as a chaperone. This chain is Chaperone protein DnaK, found in Xanthomonas oryzae pv. oryzae (strain MAFF 311018).